A 221-amino-acid polypeptide reads, in one-letter code: Penicillin-binding protein activator LpoB (221 aa).

The signal sequence occupies residues 1–20 (MLNRMYRYALLATVALALSG). A lipid anchor (N-palmitoyl cysteine) is attached at C21. Residue C21 is the site of S-diacylglycerol cysteine attachment. The tract at residues 29 to 82 (PAPVEEAQPGTQQPTQPVPPPTQPVPTVPSVPSIPAQPGPIEHQPENATPEPKA) is disordered. Positions 44 to 57 (QPVPPPTQPVPTVP) are enriched in pro residues.

This sequence belongs to the LpoB family. As to quaternary structure, interacts with PBP1b.

Its subcellular location is the cell outer membrane. Its function is as follows. Regulator of peptidoglycan synthesis that is essential for the function of penicillin-binding protein 1B (PBP1b). The polypeptide is Penicillin-binding protein activator LpoB (Cronobacter turicensis (strain DSM 18703 / CCUG 55852 / LMG 23827 / z3032)).